The sequence spans 363 residues: Uptake hydrogenase small subunit (363 aa).

The segment at residues Met-1–Ala-43 is a signal peptide (tat-type signal). [4Fe-4S] cluster is bound by residues Cys-60, Cys-63, Cys-158, Cys-192, His-230, Cys-233, Cys-258, and Cys-264. [3Fe-4S] cluster contacts are provided by Cys-273, Cys-292, and Cys-295.

This sequence belongs to the [NiFe]/[NiFeSe] hydrogenase small subunit family. As to quaternary structure, heterodimer of a large and a small subunit. The cofactor is [4Fe-4S] cluster. Requires [3Fe-4S] cluster as cofactor. In terms of processing, predicted to be exported by the Tat system. The position of the signal peptide cleavage has not been experimentally proven.

The protein resides in the cell membrane. The enzyme catalyses H2 + A = AH2. In terms of biological role, this enzyme recycles the H(2) produced by nitrogenase to increase the production of ATP and to protect nitrogenase against inhibition or damage by O(2) under carbon- or phosphate-limited conditions. The chain is Uptake hydrogenase small subunit (hupS) from Alcaligenes hydrogenophilus.